We begin with the raw amino-acid sequence, 611 residues long: MAFNFNWSPLMADAGFYTRAQDLLTAALNKSPKPPIIVDDIVVTELNLGSNPPELEILEIGDLAEDRFRGIFKMSYAGDAVLTLKTCVQANPLNTYLLTRHPFTSPQPLAAATGLTIPLQITLSDIKLSGFVILVFSKQKGITVVFRNDPLESLKVSSTFDSIPFVRDYLQKEIEGQLRILFMDELPAIIHRLSLRLWSTEYSELETTCDQVTNPSLEGPGQDPLLNPPQDPVDSFGNVLSISEIASLSLDSGVEMHSLFSRKNALRIAALTDSQRTLSLFTPSIREVVFRAWTGSIEQADGPSGLVSPMSPPLSRTQSHITVASAPLSSQDTASVASSQSRPGLPSSGYSGYGLSLGAARHSKAHARKRKKRVIDLRPHRKPTDDMASISGESSCTDSTITTTTKSAASVYSSSIIPEENNDDDPVTPPVSPVRNSTVRRRQTLRDRIVDRDDAERTNIRRPPIPAEFGHEFPLRPTQPLPSNEIDRNVTSPNPKPEDSHHFQPPRQDTAPIRNIPSAPLGPPAPAPIPASASAYPPEKPTYTQSFPPSFMEVAHNGSILEQAWMMKMASEIARRIQDENSSAMGSYVGSGSGSGGFWDRSHTPPPAYRH.

Residues 1–195 form the SMP-LTD domain; that stretch reads MAFNFNWSPL…LPAIIHRLSL (195 aa). Residues 325–342 are compositionally biased toward polar residues; the sequence is SAPLSSQDTASVASSQSR. Disordered stretches follow at residues 325–347, 361–402, 415–544, and 587–611; these read SAPLSSQDTASVASSQSRPGLPS, RHSK…STIT, SIIP…PTYT, and SYVGSGSGSGGFWDRSHTPPPAYRH. A compositionally biased stretch (basic residues) spans 361 to 373; that stretch reads RHSKAHARKRKKR. 2 stretches are compositionally biased toward basic and acidic residues: residues 374–385 and 444–459; these read VIDLRPHRKPTD and TLRDRIVDRDDAERTN. Over residues 520 to 529 the composition is skewed to pro residues; the sequence is PLGPPAPAPI.

Belongs to the MDM34 family. Component of the ER-mitochondria encounter structure (ERMES) or MDM complex, composed of MMM1, MDM10, MDM12 and MDM34.

The protein localises to the mitochondrion outer membrane. Functionally, component of the ERMES/MDM complex, which serves as a molecular tether to connect the endoplasmic reticulum (ER) and mitochondria. Components of this complex are involved in the control of mitochondrial shape and protein biogenesis, and function in nonvesicular lipid trafficking between the ER and mitochondria. MDM34 is required for the interaction of the ER-resident membrane protein MMM1 and the outer mitochondrial membrane-resident beta-barrel protein MDM10. This is Mitochondrial distribution and morphology protein 34 from Paracoccidioides brasiliensis (strain Pb18).